We begin with the raw amino-acid sequence, 402 residues long: UPF0261 protein y4oU (402 aa).

It belongs to the UPF0261 family.

The protein is UPF0261 protein y4oU of Sinorhizobium fredii (strain NBRC 101917 / NGR234).